Consider the following 660-residue polypeptide: Polycomb protein SCMH1 (660 aa).

MBT repeat units follow at residues 28 to 126 (FTWD…LQPP) and 134 to 235 (SSWP…LQPP). The segment at 233-345 (QPPGTKVVIP…EPDTSTVPQD (113 aa)) is disordered. Composition is skewed to basic residues over residues 273-284 (RGRKPGKKRGRT) and 305-320 (FPKK…RKPR). Low complexity predominate over residues 330–343 (PTTSTPEPDTSTVP). In terms of domain architecture, SAM spans 593-658 (WTVEDVMQFV…SYHIDRLKQG (66 aa)).

It belongs to the SCM family. As to quaternary structure, interacts with the SAM domain of PHC1 via its SAM domain in vitro. Associates with a PRC1-like complex. Strongly expressed in heart, muscle and pancreas. Weakly expressed in brain, placenta, lung, liver and kidney.

Its subcellular location is the nucleus. Functionally, associates with Polycomb group (PcG) multiprotein complexes; the complex class is required to maintain the transcriptionally repressive state of some genes. The protein is Polycomb protein SCMH1 of Homo sapiens (Human).